We begin with the raw amino-acid sequence, 479 residues long: Acyltransferase easC (479 aa).

Residue His-161 is the Proton acceptor of the active site.

The protein belongs to the plant acyltransferase family. Monomer.

It participates in antibiotic biosynthesis. Functionally, acyltransferase; part of the gene cluster that mediates the biosynthesis of emericellamides, secondary metabolites acting as antibiotics. The biosynthesis of emericellamides initiates from the highly reducing polyketide synthase easB which catalyzes the formation of the linear polyketide chain. EasB produces several polyketides that can be further processed by the downstream enzymes. The polyketides are released from easB as linear polyketide carboxylic acids, which are converted to CoA thioesters by the acyl-CoA ligase easD. The substrates are then loaded onto the acyltransferase easC, which shuttles them to the first thiolation (T) domain of the nonribosomal peptide synthetase easA. EasA then performs condensation of the polyketides with one glycine, two alanine, one valine and one leucine residues. A last step of cyclization leads to the production of emericellamides. The protein is Acyltransferase easC of Emericella nidulans (strain FGSC A4 / ATCC 38163 / CBS 112.46 / NRRL 194 / M139) (Aspergillus nidulans).